An 85-amino-acid chain; its full sequence is Large ribosomal subunit protein bL27 (85 aa).

Residues 1 to 26 (MAHKKAGGSTRNGRDSESKRLGVKRF) are disordered.

Belongs to the bacterial ribosomal protein bL27 family.

The protein is Large ribosomal subunit protein bL27 of Saccharophagus degradans (strain 2-40 / ATCC 43961 / DSM 17024).